The primary structure comprises 200 residues: uncharacterized protein (200 aa).

3 disordered regions span residues 1 to 27, 42 to 79, and 169 to 200; these read MTDT…EAET, IPKE…STNA, and HGRA…EHGR. A compositionally biased stretch (basic and acidic residues) spans 187–200; it reads RQMEKTGAGREHGR.

This is an uncharacterized protein from Shigella flexneri.